The primary structure comprises 236 residues: Endonuclease V (236 aa).

The Mg(2+) site is built by Asp-47 and Asp-115.

Belongs to the endonuclease V family. Requires Mg(2+) as cofactor.

The protein resides in the cytoplasm. The catalysed reaction is Endonucleolytic cleavage at apurinic or apyrimidinic sites to products with a 5'-phosphate.. Its function is as follows. DNA repair enzyme involved in the repair of deaminated bases. Selectively cleaves double-stranded DNA at the second phosphodiester bond 3' to a deoxyinosine leaving behind the intact lesion on the nicked DNA. The chain is Endonuclease V from Xanthomonas campestris pv. campestris (strain 8004).